The following is a 161-amino-acid chain: Putative 4-hydroxy-4-methyl-2-oxoglutarate aldolase (161 aa).

Substrate is bound by residues 77 to 80 (GGNL) and arginine 99. Position 100 (aspartate 100) interacts with a divalent metal cation.

This sequence belongs to the class II aldolase/RraA-like family. In terms of assembly, homotrimer. Requires a divalent metal cation as cofactor.

It carries out the reaction 4-hydroxy-4-methyl-2-oxoglutarate = 2 pyruvate. The catalysed reaction is oxaloacetate + H(+) = pyruvate + CO2. Catalyzes the aldol cleavage of 4-hydroxy-4-methyl-2-oxoglutarate (HMG) into 2 molecules of pyruvate. Also contains a secondary oxaloacetate (OAA) decarboxylase activity due to the common pyruvate enolate transition state formed following C-C bond cleavage in the retro-aldol and decarboxylation reactions. This is Putative 4-hydroxy-4-methyl-2-oxoglutarate aldolase from Methylococcus capsulatus (strain ATCC 33009 / NCIMB 11132 / Bath).